The chain runs to 175 residues: NADH-ubiquinone oxidoreductase chain 6 (175 aa).

A run of 5 helical transmembrane segments spans residues 1-21, 25-45, 47-67, 88-108, and 149-169; these read MMIYIGFILSIVFVISFVGFS, SPIYGGLVLIVSGGVGCGIVM, FGGSFLGLMVFLIYLGGMLVV, TVLSTFILGVLMEAMLVLYMF, and YGVWIIIVTGWSLFVGVLVVL.

It belongs to the complex I subunit 6 family. Core subunit of respiratory chain NADH dehydrogenase (Complex I) which is composed of 45 different subunits.

It localises to the mitochondrion inner membrane. The catalysed reaction is a ubiquinone + NADH + 5 H(+)(in) = a ubiquinol + NAD(+) + 4 H(+)(out). Functionally, core subunit of the mitochondrial membrane respiratory chain NADH dehydrogenase (Complex I) which catalyzes electron transfer from NADH through the respiratory chain, using ubiquinone as an electron acceptor. Essential for the catalytic activity and assembly of complex I. In Rhinoceros unicornis (Greater Indian rhinoceros), this protein is NADH-ubiquinone oxidoreductase chain 6 (MT-ND6).